Here is a 305-residue protein sequence, read N- to C-terminus: Porphobilinogen deaminase (305 aa).

Cys-238 is modified (S-(dipyrrolylmethanemethyl)cysteine).

It belongs to the HMBS family. As to quaternary structure, monomer. Dipyrromethane is required as a cofactor.

The enzyme catalyses 4 porphobilinogen + H2O = hydroxymethylbilane + 4 NH4(+). Its pathway is porphyrin-containing compound metabolism; protoporphyrin-IX biosynthesis; coproporphyrinogen-III from 5-aminolevulinate: step 2/4. Tetrapolymerization of the monopyrrole PBG into the hydroxymethylbilane pre-uroporphyrinogen in several discrete steps. The sequence is that of Porphobilinogen deaminase from Rubrobacter xylanophilus (strain DSM 9941 / JCM 11954 / NBRC 16129 / PRD-1).